A 619-amino-acid polypeptide reads, in one-letter code: Alpha-L-arabinofuranosidase C (619 aa).

Positions 1–37 are cleaved as a signal peptide; sequence MINHNKTPNILAKVFKRTCGLVSTGAALAILSQAASA. Residues 38 to 136 form the CBM2 domain; that stretch reads ACTYTIDSEW…TVTGAACNSA (99 aa). A disulfide bond links C39 and C133. A CBM6 domain is found at 163–289; that stretch reads LLQEAQAGFC…LPNIDSLSVV (127 aa). The interval 300–319 is disordered; sequence SVSSSSSVQSSSSSSSTPSQ.

Belongs to the glycosyl hydrolase 62 family.

The protein resides in the secreted. It catalyses the reaction Hydrolysis of terminal non-reducing alpha-L-arabinofuranoside residues in alpha-L-arabinosides.. It participates in glycan metabolism; hemicellulose degradation. Xylanase C contributes to hydrolyze hemicellulose, the major component of plant cell-walls. The protein is Alpha-L-arabinofuranosidase C (xynC) of Cellvibrio japonicus (strain Ueda107) (Pseudomonas fluorescens subsp. cellulosa).